A 128-amino-acid polypeptide reads, in one-letter code: Phosphoribosyl-AMP cyclohydrolase (128 aa).

Position 77 (Asp77) interacts with Mg(2+). Cys78 is a binding site for Zn(2+). 2 residues coordinate Mg(2+): Asp79 and Asp81. Zn(2+) is bound by residues Cys94 and Cys101.

This sequence belongs to the PRA-CH family. In terms of assembly, homodimer. Mg(2+) is required as a cofactor. Zn(2+) serves as cofactor.

Its subcellular location is the cytoplasm. It catalyses the reaction 1-(5-phospho-beta-D-ribosyl)-5'-AMP + H2O = 1-(5-phospho-beta-D-ribosyl)-5-[(5-phospho-beta-D-ribosylamino)methylideneamino]imidazole-4-carboxamide. It participates in amino-acid biosynthesis; L-histidine biosynthesis; L-histidine from 5-phospho-alpha-D-ribose 1-diphosphate: step 3/9. In terms of biological role, catalyzes the hydrolysis of the adenine ring of phosphoribosyl-AMP. The chain is Phosphoribosyl-AMP cyclohydrolase from Granulibacter bethesdensis (strain ATCC BAA-1260 / CGDNIH1).